We begin with the raw amino-acid sequence, 420 residues long: Serine/threonine-protein phosphatase 4 regulatory subunit 2-A (420 aa).

A disordered region spans residues 157–420 (GNTSAFPDRN…ETADDNMEQD (264 aa)). Over residues 182-195 (SLSSNVATNGLPDS) the composition is skewed to polar residues. Basic and acidic residues predominate over residues 196 to 210 (TESKEQASEQSERTV). Over residues 212–224 (ESSASEAESHSGA) the composition is skewed to low complexity. Over residues 229 to 250 (HRDDEDATHAETHEAKRLKFDK) the composition is skewed to basic and acidic residues. The segment covering 251–266 (EEEEEEDDEEEDEDGD) has biased composition (acidic residues). Residues 267-276 (EIKKELDEPH) are compositionally biased toward basic and acidic residues. A compositionally biased stretch (polar residues) spans 278–296 (PCTSVAESSSDVPQSSTDV). Basic and acidic residues predominate over residues 318 to 332 (GVDRSTSEDSPDPSH). Acidic residues predominate over residues 346-364 (AEEEEEEESAEAQETEETN). Residues 368–394 (SSSSNNSSDEGVSSAETPSASPSSSTE) show a composition bias toward low complexity. A compositionally biased stretch (acidic residues) spans 411-420 (ETADDNMEQD).

Belongs to the PPP4R2 family. Serine/threonine-protein phosphatase 4 (PP4) occurs in different assemblies of the catalytic and one or more regulatory subunits.

Regulatory subunit of serine/threonine-protein phosphatase 4 (PP4C). This Danio rerio (Zebrafish) protein is Serine/threonine-protein phosphatase 4 regulatory subunit 2-A (ppp4r2a).